A 130-amino-acid polypeptide reads, in one-letter code: Phosphoribosyl-AMP cyclohydrolase (130 aa).

Position 77 (D77) interacts with Mg(2+). C78 serves as a coordination point for Zn(2+). 2 residues coordinate Mg(2+): D79 and D81. The Zn(2+) site is built by C95 and C102.

The protein belongs to the PRA-CH family. In terms of assembly, homodimer. Requires Mg(2+) as cofactor. The cofactor is Zn(2+).

It is found in the cytoplasm. It carries out the reaction 1-(5-phospho-beta-D-ribosyl)-5'-AMP + H2O = 1-(5-phospho-beta-D-ribosyl)-5-[(5-phospho-beta-D-ribosylamino)methylideneamino]imidazole-4-carboxamide. It participates in amino-acid biosynthesis; L-histidine biosynthesis; L-histidine from 5-phospho-alpha-D-ribose 1-diphosphate: step 3/9. In terms of biological role, catalyzes the hydrolysis of the adenine ring of phosphoribosyl-AMP. In Pseudomonas putida (strain W619), this protein is Phosphoribosyl-AMP cyclohydrolase.